Here is a 400-residue protein sequence, read N- to C-terminus: GTPase Obg (400 aa).

The region spanning 1 to 159 is the Obg domain; that stretch reads MKFVDEVQIR…RTLKLELLLL (159 aa). Positions 160–333 constitute an OBG-type G domain; sequence ADVGMLGLPN…VCYDILDLLD (174 aa). Residues 166 to 173, 191 to 195, 213 to 216, 283 to 286, and 314 to 316 contribute to the GTP site; these read GLPNAGKS, FTTLV, DIPG, NKMD, and TAI. Mg(2+)-binding residues include Ser-173 and Thr-193.

This sequence belongs to the TRAFAC class OBG-HflX-like GTPase superfamily. OBG GTPase family. Monomer. The cofactor is Mg(2+).

The protein localises to the cytoplasm. Functionally, an essential GTPase which binds GTP, GDP and possibly (p)ppGpp with moderate affinity, with high nucleotide exchange rates and a fairly low GTP hydrolysis rate. Plays a role in control of the cell cycle, stress response, ribosome biogenesis and in those bacteria that undergo differentiation, in morphogenesis control. In Aeromonas hydrophila subsp. hydrophila (strain ATCC 7966 / DSM 30187 / BCRC 13018 / CCUG 14551 / JCM 1027 / KCTC 2358 / NCIMB 9240 / NCTC 8049), this protein is GTPase Obg.